We begin with the raw amino-acid sequence, 190 residues long: Potassium-transporting ATPase KdpC subunit (190 aa).

Residues 10 to 30 (VLLLVLTGLTGFAYPLLSTAI) form a helical membrane-spanning segment.

It belongs to the KdpC family. As to quaternary structure, the system is composed of three essential subunits: KdpA, KdpB and KdpC.

Its subcellular location is the cell inner membrane. Functionally, part of the high-affinity ATP-driven potassium transport (or Kdp) system, which catalyzes the hydrolysis of ATP coupled with the electrogenic transport of potassium into the cytoplasm. This subunit acts as a catalytic chaperone that increases the ATP-binding affinity of the ATP-hydrolyzing subunit KdpB by the formation of a transient KdpB/KdpC/ATP ternary complex. The sequence is that of Potassium-transporting ATPase KdpC subunit from Sorangium cellulosum (strain So ce56) (Polyangium cellulosum (strain So ce56)).